Consider the following 993-residue polypeptide: Synaptonemal complex protein 1 (993 aa).

Positions 98-108 (PMSRLYSKLYK) match the Mediates head to head self-assembly of N-terminal ends motif. The Nuclear localization signal motif lies at 114–117 (KKWK). Coiled coils occupy residues 117–172 (KVSI…LIKE) and 215–688 (IEKM…EIEN). The interaction with SYCE3 stretch occupies residues 203–359 (ETRQVYVDLN…SQLTEVKEAQ (157 aa)). The segment at 694 to 788 (GKLLGEVEKA…VSLKKQLEIE (95 aa)) is required for pH-induced assembly of C-terminal ends into antiparallel tetramers. Positions 697 to 700 (LGEV) match the Nuclear localization signal motif. The stretch at 764–808 (KIALETELSNIRNELVSLKKQLEIEKEEKEKLKMAKENTAILKDK) forms a coiled coil. Positions 801-993 (NTAILKDKKD…RLKEAEKLFS (193 aa)) are DNA-binding. Phosphoserine is present on Ser820. Residues 824–861 (TSWKFDSKTTPSQNISRLSSSMDSGKSKDNRDNLRASA) are disordered. The span at 831–847 (KTTPSQNISRLSSSMDS) shows a compositional bias: polar residues. Residues 848–857 (GKSKDNRDNL) are compositionally biased toward basic and acidic residues. The Nuclear localization signal signature appears at 898-901 (KKRK).

As to quaternary structure, structural component of synaptonemal complexes. Homotetramer that consists of an N-terminal four-helical bundle that bifurcates into two elongated C-terminal dimeric coiled coils. This tetrameric building block potentially self-assembles into a supramolecular zipper-like lattice to mediate meiotic chromosome synapsis. Self-assembly is likely initiated by local proton density at chromosome axis, which is predicted to trigger antiparallel back to back assembly of adjacent C-terminal ends into tetrameric structures that anchor to chromosomal DNA. Then the N-terminal ends are predicted to undergo cooperative antiparallel head to head assembly at the midline of synaptonemal complexes central element to form a zipper-like lattice between properly aligned homologous chromosomes. The nascent synapsis generated by SYCP1 is stabilized through interaction with central element proteins SYCE1 and SYCE2. Interacts (via tetrameric core) with SYCE3; the interaction remodels SYCP1 homotetramers to 2:1 heterotrimers with SYCE3. SYCP1/SYCE3 heterotrimers form lattice assemblies as part of the mature synaptonemal complex via both lateral and head-to-head interactions. Forms a complex with EWSR1, PRDM9, SYCP3 and REC8; complex formation is dependent of phosphorylated form of REC8 and requires PRDM9 bound to hotspot DNA; EWSR1 joins PRDM9 with the chromosomal axis through REC8. Interacts with SPO16. In terms of tissue distribution, detected in testis. Detected in spermatocytes (at protein level).

It localises to the nucleus. Its subcellular location is the chromosome. The protein localises to the centromere. Major component of the transverse filaments of synaptonemal complexes, formed between homologous chromosomes during meiotic prophase. Required for normal assembly of the central element of the synaptonemal complexes. Required for normal centromere pairing during meiosis. Required for normal meiotic chromosome synapsis during oocyte and spermatocyte development and for normal male and female fertility. In Mus musculus (Mouse), this protein is Synaptonemal complex protein 1.